The chain runs to 129 residues: Lysozyme C (129 aa).

The 129-residue stretch at 1-129 (KVFGRCELAA…VRVWIKGCRL (129 aa)) folds into the C-type lysozyme domain. 4 disulfides stabilise this stretch: cysteine 6–cysteine 127, cysteine 30–cysteine 115, cysteine 64–cysteine 80, and cysteine 76–cysteine 94. Active-site residues include glutamate 35 and aspartate 52.

Belongs to the glycosyl hydrolase 22 family. Monomer.

Its subcellular location is the secreted. It catalyses the reaction Hydrolysis of (1-&gt;4)-beta-linkages between N-acetylmuramic acid and N-acetyl-D-glucosamine residues in a peptidoglycan and between N-acetyl-D-glucosamine residues in chitodextrins.. Its function is as follows. Lysozymes have primarily a bacteriolytic function; those in tissues and body fluids are associated with the monocyte-macrophage system and enhance the activity of immunoagents. The protein is Lysozyme C (LYZ) of Numida meleagris (Helmeted guineafowl).